The chain runs to 267 residues: Dichloromethane dehalogenase (267 aa).

The GST N-terminal domain occupies 3-85; the sequence is TKLRYLHHPA…YLSEKYDCSS (83 aa). Residues 91–224 form the GST C-terminal domain; sequence TLEERGHIQQ…AWQYENVRKY (134 aa).

Belongs to the GST superfamily. In terms of assembly, homohexamer.

Its subcellular location is the cytoplasm. The catalysed reaction is dichloromethane + H2O = formaldehyde + 2 chloride + 2 H(+). It participates in xenobiotic degradation; dichloromethane degradation. In Methylophilus leisingeri (strain DSM 6813 / VKM B-2013 / DM11), this protein is Dichloromethane dehalogenase (dcmA).